The sequence spans 576 residues: Arginine--tRNA ligase (576 aa).

Positions 122–132 (PNVAKEMHVGH) match the 'HIGH' region motif.

This sequence belongs to the class-I aminoacyl-tRNA synthetase family. As to quaternary structure, monomer.

The protein localises to the cytoplasm. The enzyme catalyses tRNA(Arg) + L-arginine + ATP = L-arginyl-tRNA(Arg) + AMP + diphosphate. The sequence is that of Arginine--tRNA ligase from Pectobacterium atrosepticum (strain SCRI 1043 / ATCC BAA-672) (Erwinia carotovora subsp. atroseptica).